The chain runs to 868 residues: Thiol protease/hemagglutinin PrtT (868 aa).

An N-terminal signal peptide occupies residues 1–27; that stretch reads MKRIFYTLGLLLLCLPMLQAGPVTRSK. Catalysis depends on residues Cys-184 and His-327.

It belongs to the peptidase C10 family.

Functionally, appears to be specific for arginine-containing peptide bonds. Possesses hemagglutinin activity. This Porphyromonas gingivalis (Bacteroides gingivalis) protein is Thiol protease/hemagglutinin PrtT (prtT).